Reading from the N-terminus, the 577-residue chain is Arginine--tRNA ligase (577 aa).

The 'HIGH' region motif lies at Pro122 to His132.

This sequence belongs to the class-I aminoacyl-tRNA synthetase family. Monomer.

Its subcellular location is the cytoplasm. The catalysed reaction is tRNA(Arg) + L-arginine + ATP = L-arginyl-tRNA(Arg) + AMP + diphosphate. This Escherichia coli O8 (strain IAI1) protein is Arginine--tRNA ligase.